Reading from the N-terminus, the 532-residue chain is Flavin-containing monooxygenase 3 (532 aa).

Residues 9–13 (GAGVS), glutamate 32, 40–41 (LW), and 61–62 (NS) contribute to the FAD site. NADP(+) is bound by residues 60 to 61 (SN) and 195 to 198 (SGCD). The residue at position 401 (serine 401) is a Phosphoserine. A helical membrane pass occupies residues 510–530 (FFFHWLKLFAIPILLIAVFLV).

The protein belongs to the FMO family. The cofactor is FAD.

Its subcellular location is the microsome membrane. The protein localises to the endoplasmic reticulum membrane. It catalyses the reaction trimethylamine + NADPH + O2 = trimethylamine N-oxide + NADP(+) + H2O. It carries out the reaction N,N-dimethylaniline + NADPH + O2 + H(+) = N,N-dimethylaniline N-oxide + NADP(+) + H2O. The catalysed reaction is hypotaurine + NADPH + O2 + H(+) = taurine + NADP(+) + H2O. The enzyme catalyses (S)-nicotine + NADPH + O2 = trans-(S)-nicotine N(1')-oxide + NADP(+) + H2O. It catalyses the reaction albendazole + NADPH + O2 + H(+) = albendazole S-oxide + NADP(+) + H2O. In terms of biological role, essential hepatic enzyme that catalyzes the oxygenation of a wide variety of nitrogen- and sulfur-containing compounds including drugs as well as dietary compounds. Plays an important role in the metabolism of trimethylamine (TMA), via the production of trimethylamine N-oxide (TMAO) metabolite. TMA is generated by the action of gut microbiota using dietary precursors such as choline, choline containing compounds, betaine or L-carnitine. By regulating TMAO concentration, FMO3 directly impacts both platelet responsiveness and rate of thrombus formation. The sequence is that of Flavin-containing monooxygenase 3 (FMO3) from Pan troglodytes (Chimpanzee).